Here is a 38-residue protein sequence, read N- to C-terminus: Large ribosomal subunit protein bL36 (38 aa).

This sequence belongs to the bacterial ribosomal protein bL36 family.

The chain is Large ribosomal subunit protein bL36 from Anaeromyxobacter dehalogenans (strain 2CP-1 / ATCC BAA-258).